Here is a 662-residue protein sequence, read N- to C-terminus: MAVLTHGSPTPSGAYFDGKGINFTLFSAHAEQVTLCLFDEQGQERQIAMPARTGDIWHGYLPGGKPGQRYGYRVSGPFDPSRGHRFNPHKLLIDPRTRALEGKVGDDPRFTGGVSQPDVRDSAAALPKCLVIHEEYDWQGDKPPAIPWGNTVIYEAHVRGLTQLHPDIPPELRGTYAALAHPALIEHLKTLGITTLELLPVQFHIDEPRLQKMGLSNYWGYNVLAPFAVDPDYASGREGISPLRELRDAVKALHNAGIEVILDVVFNHSAELDVFGPTLCQRGIDNASYYWLTPDGEYDNITGCGNALRLSHPYVTQWVIDCLNYWRDSCHVDGFRFDLGTVLGRTPAFDQHAPLFAALAADERLSACKLIAEPWDIGLGGYQLGNFPTGFSEWNDQYRDAMRGFWLRGEVPRGTFAQHFAASSRLFEQRGRLPSASINQITAHDGFTLLDLLCFNQKHNQMNGEENRDGSDNNHSNNFGCEGLVADAAIWQRRKACQRALLTTLLLSQGTPMLLAGDEQGHSQQGNNNAYCQNNILTWLDWGSADRALMTFTADLIRLRQQIPALTQDQWWQSGDSNVQWLDSQGQALSDAAWEQGCQQQLQILLSQRWLVLINATDHECEMHLPEGEWEGIPPFGVSDHAERLTTWRGSAHTICVLIKRD.

Aspartate 338 acts as the Nucleophile in catalysis. The active-site Proton donor is the glutamate 373.

This sequence belongs to the glycosyl hydrolase 13 family.

It carries out the reaction Hydrolysis of (1-&gt;6)-alpha-D-glucosidic linkages to branches with degrees of polymerization of three or four glucose residues in limit dextrin.. It functions in the pathway glycan degradation; glycogen degradation. Its function is as follows. Removes maltotriose and maltotetraose chains that are attached by 1,6-alpha-linkage to the limit dextrin main chain, generating a debranched limit dextrin. In Yersinia pseudotuberculosis serotype I (strain IP32953), this protein is Glycogen debranching enzyme.